A 153-amino-acid polypeptide reads, in one-letter code: Large ribosomal subunit protein uL15 (153 aa).

Residues 15-42 (ARRIVGRGSSSGRGTTSGRGTKGQQARA) are disordered. Residues 23-35 (SSSGRGTTSGRGT) are compositionally biased toward gly residues.

It belongs to the universal ribosomal protein uL15 family. As to quaternary structure, part of the 50S ribosomal subunit.

Its function is as follows. Binds to the 23S rRNA. The sequence is that of Large ribosomal subunit protein uL15 from Treponema pallidum (strain Nichols).